Here is a 550-residue protein sequence, read N- to C-terminus: Arginine--tRNA ligase (550 aa).

A 'HIGH' region motif is present at residues 124–134 (ANPTGPLHVGH).

Belongs to the class-I aminoacyl-tRNA synthetase family. As to quaternary structure, monomer.

Its subcellular location is the cytoplasm. The enzyme catalyses tRNA(Arg) + L-arginine + ATP = L-arginyl-tRNA(Arg) + AMP + diphosphate. The chain is Arginine--tRNA ligase from Desulfovibrio desulfuricans (strain ATCC 27774 / DSM 6949 / MB).